A 379-amino-acid chain; its full sequence is MIEHFISDPHNVKFVESIFNKKLFSSISTDYPLVIISDSHVAEKILPPVLGFIDSLGYRVILLTFPPGEKNKTWEIFISLQNQLVDHGVSLGATIMGIGGGIVLDMAGFLASTYCRGIQLFLIPTTMTAMIDASIGGKNGINLRGLKNRLGTFYPPKDVWVCPEFLTTLSKQEWCYGISESIKHGCVADAYIWEFLHSYGDTLFSSRTILNEFIKRNCQIKAVIAAKDPKDKNLRKILNFGHTIAHALETLSEGHIPHGLAVSVGMMIEIKISLESGIMKNPSLVEQLYNLSNNFNLPTTLEELRDLIPQHFLHRFYHPENIITTLGYDKKNLSNKALRMVMIEHLGRVAPCSGSYCATPKMGILYEVLKSECDAVRNN.

NAD(+)-binding positions include 67 to 72, 101 to 105, 125 to 126, Lys-138, and Lys-147; these read PGEKNK, GIVLD, and TT. Glu-180, His-242, and His-258 together coordinate Zn(2+).

Belongs to the sugar phosphate cyclases superfamily. Dehydroquinate synthase family. NAD(+) serves as cofactor. The cofactor is Co(2+). It depends on Zn(2+) as a cofactor.

It is found in the cytoplasm. It catalyses the reaction 7-phospho-2-dehydro-3-deoxy-D-arabino-heptonate = 3-dehydroquinate + phosphate. The protein operates within metabolic intermediate biosynthesis; chorismate biosynthesis; chorismate from D-erythrose 4-phosphate and phosphoenolpyruvate: step 2/7. In terms of biological role, catalyzes the conversion of 3-deoxy-D-arabino-heptulosonate 7-phosphate (DAHP) to dehydroquinate (DHQ). The chain is 3-dehydroquinate synthase from Chlamydia felis (strain Fe/C-56) (Chlamydophila felis).